A 459-amino-acid polypeptide reads, in one-letter code: Cysteine--tRNA ligase (459 aa).

Residue cysteine 31 participates in Zn(2+) binding. The 'HIGH' region signature appears at proline 33 to asparagine 43. Zn(2+)-binding residues include cysteine 216, histidine 241, and glutamate 245. The short motif at lysine 274–serine 278 is the 'KMSKS' region element. Lysine 277 contributes to the ATP binding site.

The protein belongs to the class-I aminoacyl-tRNA synthetase family. Monomer. Zn(2+) is required as a cofactor.

The protein localises to the cytoplasm. It catalyses the reaction tRNA(Cys) + L-cysteine + ATP = L-cysteinyl-tRNA(Cys) + AMP + diphosphate. This is Cysteine--tRNA ligase from Rickettsia conorii (strain ATCC VR-613 / Malish 7).